The following is a 427-amino-acid chain: Flotillin-1 (427 aa).

Ser19, Ser163, and Ser385 each carry phosphoserine. Thr387 carries the post-translational modification Phosphothreonine.

Belongs to the band 7/mec-2 family. Flotillin subfamily. In terms of assembly, heterooligomeric complex of flotillin-1 and flotillin-2 and caveolin-1 and caveolin-2. Interacts with ECPAS.

It is found in the cell membrane. The protein localises to the endosome. Its subcellular location is the membrane. The protein resides in the caveola. It localises to the melanosome. It is found in the membrane raft. Its function is as follows. May act as a scaffolding protein within caveolar membranes, functionally participating in formation of caveolae or caveolae-like vesicles. This is Flotillin-1 (FLOT1) from Homo sapiens (Human).